We begin with the raw amino-acid sequence, 112 residues long: MVGNAYTLFEGNSADDLYKAIVKKRTTYEGKPTPLYQAILWSYKVVYTSEKKLIKSLIFRIGDNTIDSIKLYKKILGVFGGFIYILTPLPIVSGFLGNYYLKKKAKEKMKEV.

The helical transmembrane segment at 75-95 threads the bilayer; it reads ILGVFGGFIYILTPLPIVSGF.

The protein localises to the membrane. This is an uncharacterized protein from Methanocaldococcus jannaschii (strain ATCC 43067 / DSM 2661 / JAL-1 / JCM 10045 / NBRC 100440) (Methanococcus jannaschii).